The primary structure comprises 343 residues: Probable long-chain-alcohol O-fatty-acyltransferase 2 (343 aa).

Helical transmembrane passes span 7-27, 36-56, 58-78, 117-137, 148-168, 235-255, 260-280, and 292-312; these read NLIK…YISS, LLSL…FSSV, FCVI…FLFA, PMSK…LHVY, FAFL…ILVF, GMLA…FYVI, TWEV…EIAM, and AVSG…LFYP.

Belongs to the wax synthase family.

Its subcellular location is the membrane. It carries out the reaction a long chain fatty alcohol + a fatty acyl-CoA = a wax ester + CoA. Functionally, catalyzes the final step in the synthesis of long-chain linear esters (waxes). This Arabidopsis thaliana (Mouse-ear cress) protein is Probable long-chain-alcohol O-fatty-acyltransferase 2 (AT2).